The sequence spans 454 residues: MVLATPPVSKGGNAGGLFMDQYQQYAAHCETADSGNGSDLESTGLPTKPDDSEESGPSSLGSDSMHGSSTEYVRQSASQPSGQRQRQKSLRVLGALLPDSLLRDIRDRRSTEYVVQFSQPEDEEKIQVPDKIPEKPSPFRLARESLSEDKIEELRAAVERANFVQTGEETLDSIDATSQSLPASSNIGGHRGNINYKYADDQYYSFHINEHENFGARSARSGDEADHSTGAGSEAGSDSGILTEQQDLFAGYRDVRCGASSTQSTIRSAKGTVRGVKNRVRNGIATFLQLQQQPNAKNFKEKDLGKVVLYTTSMGIIRETYTKCANVKQILRTLLVKFEERDVFMSVEYQAEMRQRMQSGQVRVPQLYVEGQHIGDAETVERMNESGELRQLLKPYKSMASTYTCQTCGGYRLLPCPSCNGSKKSVHRNHFTAEFVALKCMNCDEVGLVKCHNC.

Disordered stretches follow at residues 30 to 88 (ETAD…QRQK) and 217 to 239 (RSAR…GSDS). Over residues 33–45 (DSGNGSDLESTGL) the composition is skewed to polar residues. A compositionally biased stretch (low complexity) spans 58-69 (SSLGSDSMHGSS). Positions 70–84 (TEYVRQSASQPSGQR) are enriched in polar residues. The span at 217 to 227 (RSARSGDEADH) shows a compositional bias: basic and acidic residues. Residues 295–400 (NAKNFKEKDL…QLLKPYKSMA (106 aa)) form the Glutaredoxin domain.

The protein belongs to the GRXCR1 family.

This Drosophila melanogaster (Fruit fly) protein is Glutaredoxin domain-containing cysteine-rich protein CG31559.